We begin with the raw amino-acid sequence, 418 residues long: CinA-like protein (418 aa).

The protein belongs to the CinA family.

The sequence is that of CinA-like protein from Leptospira interrogans serogroup Icterohaemorrhagiae serovar copenhageni (strain Fiocruz L1-130).